A 415-amino-acid chain; its full sequence is ATP-dependent RNA helicase RhlB (415 aa).

The Q motif signature appears at 9–37; it reads QRFSDLSLHPIVRDTLAKKGFDFCTPIQA. One can recognise a Helicase ATP-binding domain in the interval 40–218; that stretch reads LPISLNGRDV…FEDMNDPEYI (179 aa). 53–60 is a binding site for ATP; it reads AQTGTGKT. Residues 164–167 carry the DEAD box motif; that stretch reads DEAD. Residues 241 to 389 enclose the Helicase C-terminal domain; sequence DKMALLLTLM…VSQYETEALL (149 aa).

It belongs to the DEAD box helicase family. RhlB subfamily. Component of the RNA degradosome, which is a multiprotein complex involved in RNA processing and mRNA degradation.

Its subcellular location is the cytoplasm. The catalysed reaction is ATP + H2O = ADP + phosphate + H(+). Functionally, DEAD-box RNA helicase involved in RNA degradation. Has RNA-dependent ATPase activity and unwinds double-stranded RNA. This Haemophilus influenzae (strain PittEE) protein is ATP-dependent RNA helicase RhlB.